Here is a 154-residue protein sequence, read N- to C-terminus: Large-conductance mechanosensitive channel (154 aa).

2 helical membrane passes run 14 to 34 and 86 to 106; these read VVDLAVGIVIGAAFGAIVNSL and VFINALINFLILAMAIFFFVV.

It belongs to the MscL family. As to quaternary structure, homopentamer.

The protein resides in the cell membrane. Channel that opens in response to stretch forces in the membrane lipid bilayer. May participate in the regulation of osmotic pressure changes within the cell. The polypeptide is Large-conductance mechanosensitive channel (Dehalococcoides mccartyi (strain ATCC BAA-2100 / JCM 16839 / KCTC 5957 / BAV1)).